The sequence spans 301 residues: GTPase Era (301 aa).

Positions 6–173 (KSGFVAIVGR…LEQTNANLEI (168 aa)) constitute an Era-type G domain. Residues 14–21 (GRPNVGKS) form a G1 region. 14–21 (GRPNVGKS) contributes to the GTP binding site. The G2 stretch occupies residues 40 to 44 (QTTRN). The segment at 61–64 (DTPG) is G3. GTP contacts are provided by residues 61-65 (DTPGI) and 123-126 (NKID). The G4 stretch occupies residues 123–126 (NKID). Residues 152-154 (ISA) are G5. The KH type-2 domain maps to 204-282 (TREEVPHSVA…FLEIWVKVQK (79 aa)).

The protein belongs to the TRAFAC class TrmE-Era-EngA-EngB-Septin-like GTPase superfamily. Era GTPase family. Monomer.

The protein localises to the cytoplasm. It is found in the cell membrane. Functionally, an essential GTPase that binds both GDP and GTP, with rapid nucleotide exchange. Plays a role in 16S rRNA processing and 30S ribosomal subunit biogenesis and possibly also in cell cycle regulation and energy metabolism. This chain is GTPase Era, found in Listeria welshimeri serovar 6b (strain ATCC 35897 / DSM 20650 / CCUG 15529 / CIP 8149 / NCTC 11857 / SLCC 5334 / V8).